A 103-amino-acid chain; its full sequence is Small ribosomal subunit protein uS14c (103 aa).

The interval 26-56 (SSKKKIRSKVSPLSLSEKTKMQEKLQSLPRN) is disordered.

Belongs to the universal ribosomal protein uS14 family. Part of the 30S ribosomal subunit.

The protein localises to the plastid. The protein resides in the chloroplast. Its function is as follows. Binds 16S rRNA, required for the assembly of 30S particles. The chain is Small ribosomal subunit protein uS14c from Saccharum officinarum (Sugarcane).